A 312-amino-acid polypeptide reads, in one-letter code: Fibrinogen-like protein 1 (312 aa).

Residues 1 to 22 form the signal peptide; it reads MAKVFSFILVTTALTMGREISA. Positions 23-61 form a coiled coil; it reads LEDCAQEQMRLRAQVRLLETRVKQQQVKIKQLLQENEVQ. The Fibrinogen C-terminal domain occupies 74 to 306; the sequence is LGSKRQYADC…SVVMKIRPND (233 aa). 2 disulfides stabilise this stretch: C83-C112 and C248-C261.

In terms of assembly, homodimer. Interacts (via the Fibrinogen C-terminal domain) with LAG3 (via Ig-like domains 1 and 2). Under normal conditions, liver-specific.

It localises to the secreted. Functionally, immune suppressive molecule that inhibits antigen-specific T-cell activation by acting as a major ligand of LAG3. Responsible for LAG3 T-cell inhibitory function. Binds LAG3 independently from MHC class II (MHC-II). Secreted by, and promotes growth of, hepatocytes. The protein is Fibrinogen-like protein 1 of Homo sapiens (Human).